Here is a 1406-residue protein sequence, read N- to C-terminus: MKDLLKFLKAQTKTEEFDAIKIALASPDMIRSWSFGEVKKPETINYRTFKPERYGLFCARIFGPVKDYECLCGKYKRLKHRGVICEKCGVEVTQTKVRRERMGHIELASPTAHIWFLKSLPSRIGLLLDMPLRDIERVLYFESYVVVEGGMTNLERRQILTEEQYLDALEEFGDEFDAKMGAEAIQALLKNMDLEQECEQLREELEETNSETKRKKLTKRIKLLEAFVLSGNKPEWMILTVLPVLPPDLRPLVPLDGGRFATSDLNDLYRRVINRNNRLKRLLDLAAPDIIVRNEKRMLQEAVDALLDNGRRGRAITGSNKRPLKSLADMIKGKQGRFRQNLLGKRVDYSGRSVITVGPYLRLHQCGLPKKMALELFKPFIYGKLELRGLATTIKAAKKMVEREEAVVWDILDEVIREHPVMLNRAPTLHRLGIQAFEPVLIEGKAIQLHPLVCAAYNADFDGDQMAVHVPLTLEAQLEARALMMSTNNILSPANGEPIIVPSQDVVLGLYYMTRDRVNGKGEGMVLTGPKEAERIYRAGVAELHARVKVRITEHEKRDNGESVENTHLVDTTVGRAILWMIVPKGLPFSLVNQALGKKAISKMLNTCYRVLGLKPTVIFADQIMYTGFAYAARSGSSVGIDDMVIPAKKAEIIDEAEAEVAEIQEQFQSGLVTAGERYNKVIDIWAAANERVAKAMMDNLSTEAVINRDGEEERQVSFNSIFMMADSGARGSAAQIRQLAGMRGLMAKPDGSIIETPITANFREGLNVLQYFISTHGARKGLADTALKTANSGYLTRRLVDVAQDLVVTEDDCGTFAGIVMTPVIEGGDVKEPLRERVLGRVTAEDVLKPGTADILVERNTLLNEKWCDVLEENSVDSVKVRSVVTCDTDFGVCANCYGRDLARGHLVNKGEAIGVIAAQSIGEPGTQLTMRTFHIGGAASRAAAESSIQVKNKGTIRLSNAKFVVNGSGKLVITSRNTELKLVDEFGRTKESYKVPYGAVMAKGDGAEIMGGETVANWDPHTMPVITEVDGFVRFTDMIDGQTITRQTDELTGLSSIVILDTAERTSGGKDLRPALRIVDANGNDVLLPGTDMPAQYFLPGKTIVQLEDGAKITGGDTLARLPQETSGTKDITGGLPRVADLFEARRPKEPAILAEISGIVSFGKETKGKRRLVISPVDGSDAYEEMIPKWRQLNVFEGERVERGDVISDGPESPHDILRLRGVHAVTRYIVNEVQDVYRLQGVKINDKHIEVIVRQMLRKATIASSGSSEFLEGEQVEYSRIKIANRQLENDGKVEMTYVRDLLGITKASLATESFISAASFQETTRVLTEAAVAGKRDELRGLKENVIVGRLIPAGTGYAYHQERARHRQQGEAPAAPQITADEASANLAELLNAGLGGNDD.

Zn(2+)-binding residues include C70, C72, C85, and C88. The Mg(2+) site is built by D460, D462, and D464. Zn(2+) contacts are provided by C814, C888, C895, and C898.

This sequence belongs to the RNA polymerase beta' chain family. The RNAP catalytic core consists of 2 alpha, 1 beta, 1 beta' and 1 omega subunit. When a sigma factor is associated with the core the holoenzyme is formed, which can initiate transcription. Mg(2+) serves as cofactor. Requires Zn(2+) as cofactor.

It catalyses the reaction RNA(n) + a ribonucleoside 5'-triphosphate = RNA(n+1) + diphosphate. In terms of biological role, DNA-dependent RNA polymerase catalyzes the transcription of DNA into RNA using the four ribonucleoside triphosphates as substrates. This chain is DNA-directed RNA polymerase subunit beta', found in Sodalis glossinidius (strain morsitans).